The chain runs to 302 residues: tRNA dimethylallyltransferase (302 aa).

8–15 contacts ATP; the sequence is GSSGSGKS. 10–15 serves as a coordination point for substrate; sequence SGSGKS. The interaction with substrate tRNA stretch occupies residues 33-36; sequence DSLS.

The protein belongs to the IPP transferase family. As to quaternary structure, monomer. It depends on Mg(2+) as a cofactor.

The catalysed reaction is adenosine(37) in tRNA + dimethylallyl diphosphate = N(6)-dimethylallyladenosine(37) in tRNA + diphosphate. Its function is as follows. Catalyzes the transfer of a dimethylallyl group onto the adenine at position 37 in tRNAs that read codons beginning with uridine, leading to the formation of N6-(dimethylallyl)adenosine (i(6)A). In Helicobacter hepaticus (strain ATCC 51449 / 3B1), this protein is tRNA dimethylallyltransferase.